The sequence spans 226 residues: ATP synthase F(0) complex subunit a (226 aa).

The next 6 helical transmembrane spans lie at 11 to 31 (APSMMGLPIVVLIVMFPSILF), 68 to 88 (WALMLMSLILFIGSTNLLGLL), 97 to 117 (QLSMNLGMAIPLWAGTVITGF), 138 to 158 (IPMLVVIETISLFIQPMALAV), 164 to 184 (ITAGHLLIHLIGGATLALINI), and 189 to 209 (AFITFIILILLTILEFAVALI).

This sequence belongs to the ATPase A chain family. As to quaternary structure, component of the ATP synthase complex composed at least of ATP5F1A/subunit alpha, ATP5F1B/subunit beta, ATP5MC1/subunit c (homooctomer), MT-ATP6/subunit a, MT-ATP8/subunit 8, ATP5ME/subunit e, ATP5MF/subunit f, ATP5MG/subunit g, ATP5MK/subunit k, ATP5MJ/subunit j, ATP5F1C/subunit gamma, ATP5F1D/subunit delta, ATP5F1E/subunit epsilon, ATP5PF/subunit F6, ATP5PB/subunit b, ATP5PD/subunit d, ATP5PO/subunit OSCP. ATP synthase complex consists of a soluble F(1) head domain (subunits alpha(3) and beta(3)) - the catalytic core - and a membrane F(0) domain - the membrane proton channel (subunits c, a, 8, e, f, g, k and j). These two domains are linked by a central stalk (subunits gamma, delta, and epsilon) rotating inside the F1 region and a stationary peripheral stalk (subunits F6, b, d, and OSCP). Interacts with DNAJC30; interaction is direct.

Its subcellular location is the mitochondrion inner membrane. The enzyme catalyses H(+)(in) = H(+)(out). Subunit a, of the mitochondrial membrane ATP synthase complex (F(1)F(0) ATP synthase or Complex V) that produces ATP from ADP in the presence of a proton gradient across the membrane which is generated by electron transport complexes of the respiratory chain. ATP synthase complex consist of a soluble F(1) head domain - the catalytic core - and a membrane F(1) domain - the membrane proton channel. These two domains are linked by a central stalk rotating inside the F(1) region and a stationary peripheral stalk. During catalysis, ATP synthesis in the catalytic domain of F(1) is coupled via a rotary mechanism of the central stalk subunits to proton translocation. With the subunit c (ATP5MC1), forms the proton-conducting channel in the F(0) domain, that contains two crucial half-channels (inlet and outlet) that facilitate proton movement from the mitochondrial intermembrane space (IMS) into the matrix. Protons are taken up via the inlet half-channel and released through the outlet half-channel, following a Grotthuss mechanism. The sequence is that of ATP synthase F(0) complex subunit a from Canis lupus familiaris (Dog).